A 682-amino-acid chain; its full sequence is DNA-directed RNA polymerase subunit beta' (682 aa).

Cysteine 69, cysteine 71, cysteine 87, and cysteine 90 together coordinate Zn(2+). Mg(2+) is bound by residues aspartate 489, aspartate 491, and aspartate 493.

The protein belongs to the RNA polymerase beta' chain family. RpoC1 subfamily. In terms of assembly, in plastids the minimal PEP RNA polymerase catalytic core is composed of four subunits: alpha, beta, beta', and beta''. When a (nuclear-encoded) sigma factor is associated with the core the holoenzyme is formed, which can initiate transcription. Mg(2+) is required as a cofactor. Zn(2+) serves as cofactor.

It localises to the plastid. The protein resides in the chloroplast. The enzyme catalyses RNA(n) + a ribonucleoside 5'-triphosphate = RNA(n+1) + diphosphate. In terms of biological role, DNA-dependent RNA polymerase catalyzes the transcription of DNA into RNA using the four ribonucleoside triphosphates as substrates. In Vitis vinifera (Grape), this protein is DNA-directed RNA polymerase subunit beta'.